Here is a 379-residue protein sequence, read N- to C-terminus: UDP-4-amino-4-deoxy-L-arabinose--oxoglutarate aminotransferase (379 aa).

The residue at position 182 (lysine 182) is an N6-(pyridoxal phosphate)lysine.

It belongs to the DegT/DnrJ/EryC1 family. ArnB subfamily. In terms of assembly, homodimer. Requires pyridoxal 5'-phosphate as cofactor.

The catalysed reaction is UDP-4-amino-4-deoxy-beta-L-arabinose + 2-oxoglutarate = UDP-beta-L-threo-pentopyranos-4-ulose + L-glutamate. Its pathway is nucleotide-sugar biosynthesis; UDP-4-deoxy-4-formamido-beta-L-arabinose biosynthesis; UDP-4-deoxy-4-formamido-beta-L-arabinose from UDP-alpha-D-glucuronate: step 2/3. It functions in the pathway bacterial outer membrane biogenesis; lipopolysaccharide biosynthesis. Functionally, catalyzes the conversion of UDP-4-keto-arabinose (UDP-Ara4O) to UDP-4-amino-4-deoxy-L-arabinose (UDP-L-Ara4N). The modified arabinose is attached to lipid A and is required for resistance to polymyxin and cationic antimicrobial peptides. The chain is UDP-4-amino-4-deoxy-L-arabinose--oxoglutarate aminotransferase from Escherichia coli O127:H6 (strain E2348/69 / EPEC).